The following is a 133-amino-acid chain: S-adenosylmethionine decarboxylase proenzyme (133 aa).

The active-site Schiff-base intermediate with substrate; via pyruvic acid is serine 65. At serine 65 the chain carries Pyruvic acid (Ser); by autocatalysis. Histidine 70 acts as the Proton acceptor; for processing activity in catalysis. Cysteine 85 (proton donor; for catalytic activity) is an active-site residue.

The protein belongs to the prokaryotic AdoMetDC family. Type 1 subfamily. Heterotetramer of two alpha and two beta chains arranged as a dimer of alpha/beta heterodimers. Requires pyruvate as cofactor. In terms of processing, is synthesized initially as an inactive proenzyme. Formation of the active enzyme involves a self-maturation process in which the active site pyruvoyl group is generated from an internal serine residue via an autocatalytic post-translational modification. Two non-identical subunits are generated from the proenzyme in this reaction, and the pyruvate is formed at the N-terminus of the alpha chain, which is derived from the carboxyl end of the proenzyme. The post-translation cleavage follows an unusual pathway, termed non-hydrolytic serinolysis, in which the side chain hydroxyl group of the serine supplies its oxygen atom to form the C-terminus of the beta chain, while the remainder of the serine residue undergoes an oxidative deamination to produce ammonia and the pyruvoyl group blocking the N-terminus of the alpha chain.

The enzyme catalyses S-adenosyl-L-methionine + H(+) = S-adenosyl 3-(methylsulfanyl)propylamine + CO2. Its pathway is amine and polyamine biosynthesis; S-adenosylmethioninamine biosynthesis; S-adenosylmethioninamine from S-adenosyl-L-methionine: step 1/1. In terms of biological role, catalyzes the decarboxylation of S-adenosylmethionine to S-adenosylmethioninamine (dcAdoMet), the propylamine donor required for the synthesis of the polyamines spermine and spermidine from the diamine putrescine. The polypeptide is S-adenosylmethionine decarboxylase proenzyme (Brevibacillus brevis (strain 47 / JCM 6285 / NBRC 100599)).